Consider the following 122-residue polypeptide: MIKRRDRKELRRKRHLRVRSKIKGTPERPRLAVYRSERHIYAQIIDDIAGRTIVSASTVDKELREKLTKTWNQEAAKEVGKLIAKRAAEKGIKKIVFDRGGFKFHGRIKSLADAAREAGLEF.

It belongs to the universal ribosomal protein uL18 family. Part of the 50S ribosomal subunit; part of the 5S rRNA/L5/L18/L25 subcomplex. Contacts the 5S and 23S rRNAs.

Its function is as follows. This is one of the proteins that bind and probably mediate the attachment of the 5S RNA into the large ribosomal subunit, where it forms part of the central protuberance. This is Large ribosomal subunit protein uL18 from Kosmotoga olearia (strain ATCC BAA-1733 / DSM 21960 / TBF 19.5.1).